Here is a 324-residue protein sequence, read N- to C-terminus: Non-homologous end joining protein Ku 1 (324 aa).

A Ku domain is found at I10 to M193. The tract at residues Q256 to S324 is disordered. Residues A281–I292 show a composition bias toward basic and acidic residues.

Belongs to the prokaryotic Ku family. As to quaternary structure, homodimer. Interacts with LigD.

With LigD forms a non-homologous end joining (NHEJ) DNA repair enzyme, which repairs dsDNA breaks with reduced fidelity. Binds linear dsDNA with 5'- and 3'- overhangs but not closed circular dsDNA nor ssDNA. Recruits and stimulates the ligase activity of LigD. This Saccharopolyspora erythraea (strain ATCC 11635 / DSM 40517 / JCM 4748 / NBRC 13426 / NCIMB 8594 / NRRL 2338) protein is Non-homologous end joining protein Ku 1.